The primary structure comprises 542 residues: Exopolysaccharide phosphotransferase CpsY (542 aa).

Positions 522-542 (SPTVSAPLEDGQTANPAQTAR) are disordered. Polar residues predominate over residues 533 to 542 (QTANPAQTAR).

It belongs to the stealth family.

The sequence is that of Exopolysaccharide phosphotransferase CpsY (cpsY) from Mycobacterium leprae (strain TN).